A 122-amino-acid chain; its full sequence is Large ribosomal subunit protein uL14 (122 aa).

It belongs to the universal ribosomal protein uL14 family. Part of the 50S ribosomal subunit. Forms a cluster with proteins L3 and L19. In the 70S ribosome, L14 and L19 interact and together make contacts with the 16S rRNA in bridges B5 and B8.

In terms of biological role, binds to 23S rRNA. Forms part of two intersubunit bridges in the 70S ribosome. The sequence is that of Large ribosomal subunit protein uL14 from Halothermothrix orenii (strain H 168 / OCM 544 / DSM 9562).